Consider the following 498-residue polypeptide: MASQGTKRSYEQMETDGERQNATEIRASVGKMIDGIGRFYIQMCTELKLSDYEGRLIQNSLTIERMVLSAFDERRNKYLEEHPSAGKDPKKTGGPIYKRVDRKWMRELVLYDKEEIRRIWRQANNGDDATAGLTHMMIWHSNLNDTTYQRTRALVRTGMDPRMCSLMQGSTLPRRSGAAGAAVKGVGTMVMELIRMIKRGINDRNFWRGENGRKTRIAYERMCNILKGKFQTAAQRAMMDQVRESRNPGNAEIEDLIFLARSALILRGSVAHKSCLPACVYGPAVASGYDFEKEGYSLVGIDPFKLLQNSQVYSLIRPNENPAHKSQLVWMACNSAAFEDLRVSSFIRGTKVIPRGKLSTRGVQIASNENMDTMESSTLELRSRYWAIRTRSGGNTNQQRASAGQISIQPTFSVQRNLPFDKTTIMAAFTGNAEGRTSDMRAEIIRMMESAKPEEVSFQGRGVFELSDEKAANPIVPSFDMSNEGSYFFGDNAEEYDN.

The short motif at 1–18 (MASQGTKRSYEQMETDGE) is the Unconventional nuclear localization signal element. Positions 1–21 (MASQGTKRSYEQMETDGERQN) are disordered. The segment covering 8-21 (RSYEQMETDGERQN) has biased composition (basic and acidic residues). Residues 198–216 (KRGINDRNFWRGENGRKTR) carry the Bipartite nuclear localization signal motif.

Belongs to the influenza viruses nucleoprotein family. Homomultimerizes to form the nucleocapsid. May bind host exportin-1/XPO1. Binds to viral genomic RNA. Protein-RNA contacts are mediated by a combination of electrostatic interactions between positively charged residues and the phosphate backbone and planar interactions between aromatic side chains and bases. Post-translationally, late in virus-infected cells, may be cleaved from a 56-kDa protein to a 53-kDa protein by a cellular caspase. This cleavage might be a marker for the onset of apoptosis in infected cells or have a specific function in virus host interaction.

Its subcellular location is the virion. It localises to the host nucleus. Encapsidates the negative strand viral RNA, protecting it from nucleases. The encapsidated genomic RNA is termed the ribonucleoprotein (RNP) and serves as template for transcription and replication. The RNP needs to be localized in the host nucleus to start an infectious cycle, but is too large to diffuse through the nuclear pore complex. NP comprises at least 2 nuclear localization signals that are responsible for the active RNP import into the nucleus through cellular importin alpha/beta pathway. Later in the infection, nclear export of RNPs are mediated through viral proteins NEP interacting with M1 which binds nucleoproteins. It is possible that nucleoprotein binds directly host exportin-1/XPO1 and plays an active role in RNPs nuclear export. M1 interaction with RNP seems to hide nucleoprotein's nuclear localization signals. Soon after a virion infects a new cell, M1 dissociates from the RNP under acidification of the virion driven by M2 protein. Dissociation of M1 from RNP unmasks nucleoprotein's nuclear localization signals, targeting the RNP to the nucleus. The sequence is that of Nucleoprotein from Influenza A virus (strain A/Malaysia:Malaya/302/1954 H1N1).